Consider the following 774-residue polypeptide: 5-methyltetrahydropteroyltriglutamate--homocysteine methyltransferase (774 aa).

5-methyltetrahydropteroyltri-L-glutamate-binding positions include 23–26 (RELK) and Lys123. L-homocysteine-binding positions include 446 to 448 (IGS) and Glu499. L-methionine contacts are provided by residues 446 to 448 (IGS) and Glu499. 5-methyltetrahydropteroyltri-L-glutamate contacts are provided by residues 530–531 (RC) and Trp576. Asp614 contributes to the L-homocysteine binding site. An L-methionine-binding site is contributed by Asp614. Glu620 is a 5-methyltetrahydropteroyltri-L-glutamate binding site. 3 residues coordinate Zn(2+): His656, Cys658, and Glu680. His709 functions as the Proton donor in the catalytic mechanism. Cys741 serves as a coordination point for Zn(2+).

This sequence belongs to the vitamin-B12 independent methionine synthase family. Zn(2+) is required as a cofactor.

The enzyme catalyses 5-methyltetrahydropteroyltri-L-glutamate + L-homocysteine = tetrahydropteroyltri-L-glutamate + L-methionine. It participates in amino-acid biosynthesis; L-methionine biosynthesis via de novo pathway; L-methionine from L-homocysteine (MetE route): step 1/1. Functionally, catalyzes the transfer of a methyl group from 5-methyltetrahydrofolate to homocysteine resulting in methionine formation. In Aliivibrio fischeri (strain MJ11) (Vibrio fischeri), this protein is 5-methyltetrahydropteroyltriglutamate--homocysteine methyltransferase.